The chain runs to 155 residues: Ribosome maturation factor RimP (155 aa).

The protein belongs to the RimP family.

The protein localises to the cytoplasm. In terms of biological role, required for maturation of 30S ribosomal subunits. The sequence is that of Ribosome maturation factor RimP from Staphylococcus aureus (strain JH9).